A 134-amino-acid polypeptide reads, in one-letter code: Putative thioredoxin 2 (134 aa).

In terms of domain architecture, Thioredoxin spans 3-106 (STVELTKENF…LTDVIGQARK (104 aa)). Cysteines 31 and 34 form a disulfide. Residues 115–134 (AVAEQQAQAGQNGQEGQEGQ) are disordered. Low complexity predominate over residues 117-134 (AEQQAQAGQNGQEGQEGQ).

The protein belongs to the thioredoxin family.

The protein resides in the cytoplasm. Component of the thioredoxin-thioredoxin reductase system. Participates in various redox reactions through the reversible oxidation of its active center dithiol to a disulfide and catalyzes dithiol-disulfide exchange reactions. The chain is Putative thioredoxin 2 (trxC) from Streptomyces coelicolor (strain ATCC BAA-471 / A3(2) / M145).